The chain runs to 467 residues: Ethanolamine-phosphate phospho-lyase homolog 1 (467 aa).

N6-(pyridoxal phosphate)lysine is present on lysine 307.

The protein belongs to the class-III pyridoxal-phosphate-dependent aminotransferase family. Pyridoxal 5'-phosphate serves as cofactor.

This chain is Ethanolamine-phosphate phospho-lyase homolog 1, found in Caenorhabditis elegans.